Here is a 430-residue protein sequence, read N- to C-terminus: Adenylosuccinate synthetase (430 aa).

GTP-binding positions include 12–18 (GDEGKGK) and 40–42 (GHT). The Proton acceptor role is filled by D13. The Mg(2+) site is built by D13 and G40. IMP-binding positions include 13–16 (DEGK), 38–41 (NAGH), T128, R142, Q223, T238, and R302. Catalysis depends on H41, which acts as the Proton donor. 298-304 (TTTGRPR) lines the substrate pocket. Residues R304, 330–332 (SID), and 412–414 (SVG) contribute to the GTP site.

The protein belongs to the adenylosuccinate synthetase family. As to quaternary structure, homodimer. It depends on Mg(2+) as a cofactor.

The protein resides in the cytoplasm. The catalysed reaction is IMP + L-aspartate + GTP = N(6)-(1,2-dicarboxyethyl)-AMP + GDP + phosphate + 2 H(+). It participates in purine metabolism; AMP biosynthesis via de novo pathway; AMP from IMP: step 1/2. Plays an important role in the de novo pathway of purine nucleotide biosynthesis. Catalyzes the first committed step in the biosynthesis of AMP from IMP. The chain is Adenylosuccinate synthetase from Streptococcus pyogenes serotype M12 (strain MGAS9429).